A 376-amino-acid polypeptide reads, in one-letter code: Glutamate 5-kinase (376 aa).

Lys17 is a binding site for ATP. The substrate site is built by Ser57, Asp144, and Asn156. Residue 176-177 (TD) coordinates ATP. One can recognise a PUA domain in the interval 283 to 361 (KGQLVLDEGA…SEINQLLGYS (79 aa)).

The protein belongs to the glutamate 5-kinase family.

Its subcellular location is the cytoplasm. It carries out the reaction L-glutamate + ATP = L-glutamyl 5-phosphate + ADP. The protein operates within amino-acid biosynthesis; L-proline biosynthesis; L-glutamate 5-semialdehyde from L-glutamate: step 1/2. In terms of biological role, catalyzes the transfer of a phosphate group to glutamate to form L-glutamate 5-phosphate. This Hydrogenovibrio crunogenus (strain DSM 25203 / XCL-2) (Thiomicrospira crunogena) protein is Glutamate 5-kinase.